Reading from the N-terminus, the 137-residue chain is Small ribosomal subunit protein uS12 (137 aa).

Positions 1-23 (MPTINQLVRKPRKSNATKSKSPA) are disordered. A 3-methylthioaspartic acid modification is found at Asp102.

The protein belongs to the universal ribosomal protein uS12 family. As to quaternary structure, part of the 30S ribosomal subunit. Contacts proteins S8 and S17. May interact with IF1 in the 30S initiation complex.

In terms of biological role, with S4 and S5 plays an important role in translational accuracy. Its function is as follows. Interacts with and stabilizes bases of the 16S rRNA that are involved in tRNA selection in the A site and with the mRNA backbone. Located at the interface of the 30S and 50S subunits, it traverses the body of the 30S subunit contacting proteins on the other side and probably holding the rRNA structure together. The combined cluster of proteins S8, S12 and S17 appears to hold together the shoulder and platform of the 30S subunit. This Leuconostoc citreum (strain KM20) protein is Small ribosomal subunit protein uS12.